The primary structure comprises 221 residues: Small ribosomal subunit protein uS3 (221 aa).

The KH type-2 domain occupies 39–108 (IRKFVKKELF…NVLINIVEVK (70 aa)).

It belongs to the universal ribosomal protein uS3 family. Part of the 30S ribosomal subunit. Forms a tight complex with proteins S10 and S14.

Binds the lower part of the 30S subunit head. Binds mRNA in the 70S ribosome, positioning it for translation. The polypeptide is Small ribosomal subunit protein uS3 (Clostridium beijerinckii (strain ATCC 51743 / NCIMB 8052) (Clostridium acetobutylicum)).